The following is a 276-amino-acid chain: MKDMGEDRPGIGHSTNLVGLPTDLLASAWFNQAAPEIHIAGVREMNRSLFEMLAEAPDLESAGEAFYKYMIAMFGLDPEQQDHRPGQGGAVRRFHASYLRLLKGWGYDTNAKEGAVLKGWVESRFGLFPTFHREPITKFASKAWITYIEEKMTSRFHNNSIYVQLDLMYEFCQWALARFAAPGESALLLYRGVNDFTEHQMIERIDNRQVVVRMNNLVSFSSDRGVADCFGDTILETRVPVSKIVFFNTLLTSHPLKGEGEYLVIGGDYLVKASYL.

In terms of assembly, monomer.

The enzyme catalyses L-arginyl-[dinitrogen reductase] + NAD(+) = N(omega)-alpha-(ADP-D-ribosyl)-L-arginyl-[dinitrogen reductase] + nicotinamide + H(+). Its function is as follows. Involved in the regulation of the nitrogen fixation activity by the reversible ADP-ribosylation of the dinitrogenase reductase component of the nitrogenase enzyme complex. The ADP-ribosyltransferase (DraT) transfers the ADP-ribose group from NAD to dinitrogenase reductase. The ADP-ribose group is removed through the action of the ADP-ribosylglycohydrolase (DraG). The chain is NAD(+)--dinitrogen-reductase ADP-D-ribosyltransferase (draT) from Rhodospirillum rubrum.